Consider the following 491-residue polypeptide: MKIMMVTSELVPFAKVGGLADAVTALSIALAEKRHDVRVVMPRYYKIDRKNLKQIPGAMAVHLGPYEHWVGVYESNLPSSKVKVYFIDHEQAFGRDGVYGSAFEPDFSDNTKRFSLLAHAAFQVCRKQAWIPDVVHAHDWAAGLVPVLLRFTEKNTEFKNTASVFTIHNMGYQGVYSKHTFPDTGLDWNDFYTTGFEDWDRINFLKAALVSSDMLTTVSPSYAEEIKRPEFGFRMDGILRYREKELTGILNGVDTSIWNPSKDEYIPYRYNSKTLEEKEKNKSVLQERFGLEIDISVPVFGMISRLVDQKGISELFGPMYGSAFKICSDIKLQMVVLGSGESWCEKELNFLSQRLPNFRCYIGYNEELSHLIEAGSDFFLMPSRYEPCGLNQMYSLLYGTLPIVRKTGGLADTVENYNEETGEGTGFVLDYLSPQSIYDTVGWAAYAWYNKKDHIKKMRTKAMSKKFGWNIAAEKYLKVYADAIEKKASML.

Lysine 15 is an ADP-alpha-D-glucose binding site.

Belongs to the glycosyltransferase 1 family. Bacterial/plant glycogen synthase subfamily.

It catalyses the reaction [(1-&gt;4)-alpha-D-glucosyl](n) + ADP-alpha-D-glucose = [(1-&gt;4)-alpha-D-glucosyl](n+1) + ADP + H(+). It functions in the pathway glycan biosynthesis; glycogen biosynthesis. Functionally, synthesizes alpha-1,4-glucan chains using ADP-glucose. This is Glycogen synthase from Treponema denticola (strain ATCC 35405 / DSM 14222 / CIP 103919 / JCM 8153 / KCTC 15104).